The primary structure comprises 103 residues: N(4)-acetylcytidine amidohydrolase (103 aa).

Residues 6–94 form the ASCH domain; sequence ITFFQRFQDD…IAGIYPDQTQ (89 aa). The active-site Proton acceptor is Lys-21. Residue Thr-24 is the Nucleophile of the active site. The Proton donor role is filled by Glu-74.

The protein belongs to the N(4)-acetylcytidine amidohydrolase family.

It catalyses the reaction N(4)-acetylcytidine + H2O = cytidine + acetate + H(+). The catalysed reaction is N(4)-acetyl-2'-deoxycytidine + H2O = 2'-deoxycytidine + acetate + H(+). It carries out the reaction N(4)-acetylcytosine + H2O = cytosine + acetate + H(+). Functionally, catalyzes the hydrolysis of N(4)-acetylcytidine (ac4C). In Citrobacter koseri (strain ATCC BAA-895 / CDC 4225-83 / SGSC4696), this protein is N(4)-acetylcytidine amidohydrolase.